Here is a 359-residue protein sequence, read N- to C-terminus: MIYHFLVPLSAQIGALNVFRYITFRSIYALLTALVITIVLGPMMMRWLQKIKCGQYIQDEVGELHKCKAGTPTMGGLLLGFGVLVSTLLWADLTNIYVWLTMLVFAGFGLVGFVDDYTKIRGKQNKGISPKAKLLGQLLVAGTAVGLLIMQPAYSTELAVPFFKNFTPDLGWMYLPFALLVMIGASNGVNLTDGLDGLAIGPSITSATCYAFFIYIAGHIGMANYLNVPHVPGVGEVTVFCGALVGAGLGFLWYNAYPAQLFMGDVGSLSIGGVLGFIAVLCKQELLLIIVGGVFVFETISVIMQVSYFKVSGGKRIFRMAPLHHHFEHKGVPESKIVIRFWVISILMALMALSTLKIR.

The next 10 membrane-spanning stretches (helical) occupy residues 27-47 (IYAL…MMRW), 73-93 (TMGG…WADL), 94-114 (TNIY…VGFV), 134-154 (LLGQ…QPAY), 166-186 (FTPD…IGAS), 197-217 (GLAI…IYIA), 233-253 (GVGE…GFLW), 261-281 (LFMG…IAVL), 286-306 (LLLI…IMQV), and 336-356 (KIVI…LSTL).

This sequence belongs to the glycosyltransferase 4 family. MraY subfamily. It depends on Mg(2+) as a cofactor.

Its subcellular location is the cell inner membrane. The catalysed reaction is UDP-N-acetyl-alpha-D-muramoyl-L-alanyl-gamma-D-glutamyl-meso-2,6-diaminopimeloyl-D-alanyl-D-alanine + di-trans,octa-cis-undecaprenyl phosphate = di-trans,octa-cis-undecaprenyl diphospho-N-acetyl-alpha-D-muramoyl-L-alanyl-D-glutamyl-meso-2,6-diaminopimeloyl-D-alanyl-D-alanine + UMP. Its pathway is cell wall biogenesis; peptidoglycan biosynthesis. Its function is as follows. Catalyzes the initial step of the lipid cycle reactions in the biosynthesis of the cell wall peptidoglycan: transfers peptidoglycan precursor phospho-MurNAc-pentapeptide from UDP-MurNAc-pentapeptide onto the lipid carrier undecaprenyl phosphate, yielding undecaprenyl-pyrophosphoryl-MurNAc-pentapeptide, known as lipid I. This chain is Phospho-N-acetylmuramoyl-pentapeptide-transferase, found in Maridesulfovibrio salexigens (strain ATCC 14822 / DSM 2638 / NCIMB 8403 / VKM B-1763) (Desulfovibrio salexigens).